We begin with the raw amino-acid sequence, 372 residues long: 4-hydroxy-3-methylbut-2-en-1-yl diphosphate synthase (flavodoxin) (372 aa).

[4Fe-4S] cluster-binding residues include Cys-270, Cys-273, Cys-305, and Glu-312.

The protein belongs to the IspG family. [4Fe-4S] cluster serves as cofactor.

It carries out the reaction (2E)-4-hydroxy-3-methylbut-2-enyl diphosphate + oxidized [flavodoxin] + H2O + 2 H(+) = 2-C-methyl-D-erythritol 2,4-cyclic diphosphate + reduced [flavodoxin]. The protein operates within isoprenoid biosynthesis; isopentenyl diphosphate biosynthesis via DXP pathway; isopentenyl diphosphate from 1-deoxy-D-xylulose 5-phosphate: step 5/6. Converts 2C-methyl-D-erythritol 2,4-cyclodiphosphate (ME-2,4cPP) into 1-hydroxy-2-methyl-2-(E)-butenyl 4-diphosphate. In Shigella boydii serotype 18 (strain CDC 3083-94 / BS512), this protein is 4-hydroxy-3-methylbut-2-en-1-yl diphosphate synthase (flavodoxin).